The sequence spans 214 residues: Outer-membrane lipoprotein LolB (214 aa).

An N-terminal signal peptide occupies residues 1 to 25 (MNNLKRLTKTIFSCFTLSALLLLAG). Cys26 carries the N-palmitoyl cysteine lipid modification. Cys26 is lipidated: S-diacylglycerol cysteine. The span at 143–160 (QVIESDSQGKPKQLTNTQ) shows a compositional bias: polar residues. Positions 143-163 (QVIESDSQGKPKQLTNTQTPP) are disordered.

This sequence belongs to the LolB family. As to quaternary structure, monomer.

It localises to the cell outer membrane. Its function is as follows. Plays a critical role in the incorporation of lipoproteins in the outer membrane after they are released by the LolA protein. The polypeptide is Outer-membrane lipoprotein LolB (Shewanella baltica (strain OS223)).